We begin with the raw amino-acid sequence, 384 residues long: Ribosomal RNA large subunit methyltransferase G (384 aa).

This sequence belongs to the methyltransferase superfamily. RlmG family.

Its subcellular location is the cytoplasm. The catalysed reaction is guanosine(1835) in 23S rRNA + S-adenosyl-L-methionine = N(2)-methylguanosine(1835) in 23S rRNA + S-adenosyl-L-homocysteine + H(+). In terms of biological role, specifically methylates the guanine in position 1835 (m2G1835) of 23S rRNA. The sequence is that of Ribosomal RNA large subunit methyltransferase G from Streptomyces griseus subsp. griseus (strain JCM 4626 / CBS 651.72 / NBRC 13350 / KCC S-0626 / ISP 5235).